Reading from the N-terminus, the 509-residue chain is ATP synthase subunit alpha (509 aa).

169 to 176 lines the ATP pocket; the sequence is GDRQTGKT.

The protein belongs to the ATPase alpha/beta chains family. As to quaternary structure, F-type ATPases have 2 components, CF(1) - the catalytic core - and CF(0) - the membrane proton channel. CF(1) has five subunits: alpha(3), beta(3), gamma(1), delta(1), epsilon(1). CF(0) has three main subunits: a(1), b(2) and c(9-12). The alpha and beta chains form an alternating ring which encloses part of the gamma chain. CF(1) is attached to CF(0) by a central stalk formed by the gamma and epsilon chains, while a peripheral stalk is formed by the delta and b chains.

Its subcellular location is the cell inner membrane. It catalyses the reaction ATP + H2O + 4 H(+)(in) = ADP + phosphate + 5 H(+)(out). In terms of biological role, produces ATP from ADP in the presence of a proton gradient across the membrane. The alpha chain is a regulatory subunit. The protein is ATP synthase subunit alpha of Mesorhizobium japonicum (strain LMG 29417 / CECT 9101 / MAFF 303099) (Mesorhizobium loti (strain MAFF 303099)).